The chain runs to 624 residues: Bifunctional protein ArgH (624 aa).

Residues Met1–Val466 form an argininosuccinate lyase region. The region spanning Val464–Gln614 is the N-acetyltransferase domain. The segment at Arg467 to Ala624 is probable acetyltransferase.

The protein in the N-terminal section; belongs to the lyase 1 family. Argininosuccinate lyase subfamily.

The protein resides in the cytoplasm. The enzyme catalyses 2-(N(omega)-L-arginino)succinate = fumarate + L-arginine. It participates in amino-acid biosynthesis; L-arginine biosynthesis; L-arginine from L-ornithine and carbamoyl phosphate: step 3/3. The sequence is that of Bifunctional protein ArgH (argH) from Aliivibrio fischeri (strain ATCC 700601 / ES114) (Vibrio fischeri).